A 336-amino-acid polypeptide reads, in one-letter code: Tetraacyldisaccharide 4'-kinase (336 aa).

60–67 provides a ligand contact to ATP; that stretch reads TVGGTGKT.

Belongs to the LpxK family.

The enzyme catalyses a lipid A disaccharide + ATP = a lipid IVA + ADP + H(+). It functions in the pathway glycolipid biosynthesis; lipid IV(A) biosynthesis; lipid IV(A) from (3R)-3-hydroxytetradecanoyl-[acyl-carrier-protein] and UDP-N-acetyl-alpha-D-glucosamine: step 6/6. Transfers the gamma-phosphate of ATP to the 4'-position of a tetraacyldisaccharide 1-phosphate intermediate (termed DS-1-P) to form tetraacyldisaccharide 1,4'-bis-phosphate (lipid IVA). The chain is Tetraacyldisaccharide 4'-kinase from Pseudomonas fluorescens (strain Pf0-1).